The primary structure comprises 452 residues: UDP-N-acetylmuramoylalanine--D-glutamate ligase (452 aa).

Position 115–121 (115–121) interacts with ATP; sequence GTNGKTT.

It belongs to the MurCDEF family.

Its subcellular location is the cytoplasm. The enzyme catalyses UDP-N-acetyl-alpha-D-muramoyl-L-alanine + D-glutamate + ATP = UDP-N-acetyl-alpha-D-muramoyl-L-alanyl-D-glutamate + ADP + phosphate + H(+). The protein operates within cell wall biogenesis; peptidoglycan biosynthesis. In terms of biological role, cell wall formation. Catalyzes the addition of glutamate to the nucleotide precursor UDP-N-acetylmuramoyl-L-alanine (UMA). The chain is UDP-N-acetylmuramoylalanine--D-glutamate ligase from Geobacter metallireducens (strain ATCC 53774 / DSM 7210 / GS-15).